The primary structure comprises 189 residues: MLKLIVGLGNPGEQYQKTRHNAGFWLLDQTAQDYSCRLRTEKKFFAEFGEIAINQQKIFLLKPQTFMNASGKSLAAVCRFYHIEPQQILIIHDELDLPEGKIKLKKSGGHGGHNGLRDIIAALASQDFYRLRIGIGRPENSTQVIDYVLKAPSATHMERLNESLSYGKKAIEKLITEGDEKAMHWLHSL.

A tRNA-binding site is contributed by tyrosine 15. Histidine 20 functions as the Proton acceptor in the catalytic mechanism. TRNA is bound by residues phenylalanine 66, asparagine 68, and asparagine 114.

This sequence belongs to the PTH family. In terms of assembly, monomer.

It localises to the cytoplasm. It carries out the reaction an N-acyl-L-alpha-aminoacyl-tRNA + H2O = an N-acyl-L-amino acid + a tRNA + H(+). In terms of biological role, hydrolyzes ribosome-free peptidyl-tRNAs (with 1 or more amino acids incorporated), which drop off the ribosome during protein synthesis, or as a result of ribosome stalling. Its function is as follows. Catalyzes the release of premature peptidyl moieties from peptidyl-tRNA molecules trapped in stalled 50S ribosomal subunits, and thus maintains levels of free tRNAs and 50S ribosomes. The polypeptide is Peptidyl-tRNA hydrolase (Dichelobacter nodosus (strain VCS1703A)).